We begin with the raw amino-acid sequence, 332 residues long: Capsular polysaccharide phosphotransferase WcwK (332 aa).

It belongs to the stealth family.

This is Capsular polysaccharide phosphotransferase WcwK (wcwK) from Streptococcus pneumoniae.